The following is a 121-amino-acid chain: Keratin-associated protein 1-4 (121 aa).

Belongs to the KRTAP type 1 family. As to quaternary structure, interacts with hair keratins. In terms of tissue distribution, expressed in the middle/upper portions of the hair cortex, in the region termed the keratogenous zone.

In terms of biological role, in the hair cortex, hair keratin intermediate filaments are embedded in an interfilamentous matrix, consisting of hair keratin-associated proteins (KRTAP), which are essential for the formation of a rigid and resistant hair shaft through their extensive disulfide bond cross-linking with abundant cysteine residues of hair keratins. The matrix proteins include the high-sulfur and high-glycine-tyrosine keratins. The chain is Keratin-associated protein 1-4 (KRTAP1-4) from Homo sapiens (Human).